Consider the following 489-residue polypeptide: UDP-N-acetylmuramate--L-alanine ligase (489 aa).

130–136 (GTHGKTS) is an ATP binding site.

The protein belongs to the MurCDEF family.

The protein localises to the cytoplasm. The enzyme catalyses UDP-N-acetyl-alpha-D-muramate + L-alanine + ATP = UDP-N-acetyl-alpha-D-muramoyl-L-alanine + ADP + phosphate + H(+). It participates in cell wall biogenesis; peptidoglycan biosynthesis. Cell wall formation. The polypeptide is UDP-N-acetylmuramate--L-alanine ligase (Corynebacterium efficiens (strain DSM 44549 / YS-314 / AJ 12310 / JCM 11189 / NBRC 100395)).